Reading from the N-terminus, the 312-residue chain is Olfactory receptor 4L1 (312 aa).

The Extracellular segment spans residues 1-25 (MDLKNGSLVTEFILLGFFGRWELQI). N-linked (GlcNAc...) asparagine glycosylation is present at Asn-5. A helical membrane pass occupies residues 26-49 (FFFVTFSLIYGATVMGNILIMVTV). Residues 50 to 57 (TCRSTLHS) lie on the Cytoplasmic side of the membrane. A helical membrane pass occupies residues 58–79 (PLYFLLGNLSFLDMCLSTATTP). At 80–100 (KMIIDLLTDHKTISVWGCVTQ) the chain is on the extracellular side. A disulfide bridge links Cys-97 with Cys-189. A helical transmembrane segment spans residues 101–120 (MFFMHFFGGAEMTLLIIMAF). Residues 121-139 (DRYVAICKPLHYRTIMSHK) are Cytoplasmic-facing. Residues 140-158 (LLKGFAILSWIIGFLHSIS) traverse the membrane as a helical segment. Residues 159 to 195 (QIVLTMNLPFCGHNVINNIFCDLPLVIKLACIETYTL) lie on the Extracellular side of the membrane. A helical transmembrane segment spans residues 196–219 (ELFVIADSGLLSFTCFILLLVSYI). Residues 220-235 (VILVSVPKKSSHGLSK) lie on the Cytoplasmic side of the membrane. Residues 236 to 258 (ALSTLSAHIIVVTLFFGPCIFIY) form a helical membrane-spanning segment. The Extracellular portion of the chain corresponds to 259–269 (VWPFSSLASNK). A glycan (N-linked (GlcNAc...) asparagine) is linked at Asn-268. Residues 270 to 289 (TLAVFYTVITPLLNPSIYTL) form a helical membrane-spanning segment. The Cytoplasmic segment spans residues 290–312 (RNKKMQEAIRKLRFQYVSSAQNF).

It belongs to the G-protein coupled receptor 1 family.

The protein resides in the cell membrane. Functionally, odorant receptor. In Homo sapiens (Human), this protein is Olfactory receptor 4L1 (OR4L1).